A 148-amino-acid chain; its full sequence is Calmodulin-4 (148 aa).

EF-hand domains are found at residues 8-43 (EEVAEFQAAFNRFDKNKDGHISVEELGDVMKQLGKN), 44-79 (LPEKDLKALISKLDTDGDGKISFEEFLTAIEKYKKG), 80-115 (HRAGELRAVFNVLDQNGDGYITVDELKESLSKLGES), and 116-148 (LSQEELEDMIRVADVDQDGKVKYEEFVRLHVEN). Residues Asp21, Asn23, Asp25, His27, Glu32, Asp57, Asp59, Asp61, Lys63, Glu68, Asp93, Asn95, Asp97, Tyr99, and Glu104 each coordinate Ca(2+).

Its function is as follows. Implicated in the early stage of ectopic ossification. The protein is Calmodulin-4 (Calm4) of Mus musculus (Mouse).